The following is a 610-amino-acid chain: Estrogen receptor beta-2 (610 aa).

The modulating stretch occupies residues 1–170; it reads MSSSTGPAPA…GILGKGDTHF (170 aa). 2 consecutive NR C4-type zinc fingers follow at residues 171–191 and 207–231; these read CAVC…CEGC and CPAT…LRKC. The segment at residues 171–236 is a DNA-binding region (nuclear receptor); that stretch reads CAVCHDYASG…RLRKCYEVGM (66 aa). In terms of domain architecture, NR LBD spans 302–538; the sequence is SPEQLVNCIL…DLLLEMLDAN (237 aa). The segment at 566-596 is disordered; that stretch reads HTSKQQPALKESNQDTRHSPQAEGTVDKTLH. Residues 577–596 show a composition bias toward basic and acidic residues; sequence SNQDTRHSPQAEGTVDKTLH.

This sequence belongs to the nuclear hormone receptor family. NR3 subfamily. As to quaternary structure, binds DNA as a homodimer. Can form a heterodimer with ER-alpha. Predominantly expressed in pituitary, telencephalon and hypothalamus as well as in the liver.

The protein localises to the nucleus. Its function is as follows. Binds estrogens with an affinity similar to that of ER-alpha, and activates expression of reporter genes containing estrogen response elements (ERE) in an estrogen-dependent manner. This chain is Estrogen receptor beta-2 (esr2b), found in Carassius auratus (Goldfish).